The sequence spans 453 residues: MSDLSSNRLPNRASRVTNQALSAIERFLHIEALSGIVLLLAAASALIFANSQYAALYESFWHTPLGFNLGHFTLSWDLHFWVNDALMTIFFLVAGMEIRREIHEGALADFKQAILPIVAAIGGVCVPAIIYFIFNFNEGHIHGWAVPTATDIAFALGILALLGKKIPSNLHIILLSLAIIDDIIAVLIIAFFYSTNIDPSGLLIAGGGIALVLFFQWIGLASAWLYILPGAIIWWGLMVTGVHPSLAGVILGMMTPVFPTRTLVAPLTMLSNAMQILQEKNTKTDLHHISTALKKMRKGQRAMIAPVTRIQKALHPWVAYGIMPVFAFANAGVSFANFDLSSGKSFLIVFGVVIGLFVGKPLGIITASYLAVKSGLCRLPPQMTWAGILLIGFLAGIGFTMSIFVSMLAFKDIILLDAAKIGVLCGSGLSALIGLGYGFIYIKRNKDIPHSSE.

Helical transmembrane passes span Phe27 to Ile47, Leu78 to Ile98, Ile114 to Phe134, Gly143 to Gly163, Ile172 to Phe192, Gly201 to Ala221, Ser222 to Val242, Pro316 to Ala336, Phe346 to Thr366, Trp385 to Val405, and Ile421 to Tyr441.

This sequence belongs to the NhaA Na(+)/H(+) (TC 2.A.33) antiporter family.

The protein resides in the cell inner membrane. The catalysed reaction is Na(+)(in) + 2 H(+)(out) = Na(+)(out) + 2 H(+)(in). Functionally, na(+)/H(+) antiporter that extrudes sodium in exchange for external protons. In Bartonella tribocorum (strain CIP 105476 / IBS 506), this protein is Na(+)/H(+) antiporter NhaA.